Reading from the N-terminus, the 120-residue chain is Small ribosomal subunit protein uS13 (120 aa).

The interval 97-120 (PVRGQRTKTNARTRKGKKKTVGAK) is disordered.

The protein belongs to the universal ribosomal protein uS13 family. As to quaternary structure, part of the 30S ribosomal subunit. Forms a loose heterodimer with protein S19. Forms two bridges to the 50S subunit in the 70S ribosome.

Located at the top of the head of the 30S subunit, it contacts several helices of the 16S rRNA. In the 70S ribosome it contacts the 23S rRNA (bridge B1a) and protein L5 of the 50S subunit (bridge B1b), connecting the 2 subunits; these bridges are implicated in subunit movement. Contacts the tRNAs in the A and P-sites. The chain is Small ribosomal subunit protein uS13 from Nitratiruptor sp. (strain SB155-2).